Reading from the N-terminus, the 788-residue chain is Structure-specific endonuclease subunit SLX4 (788 aa).

Disordered regions lie at residues 59–86, 562–584, and 599–622; these read LQNE…DNNR, KRQP…HDNS, and DLVN…PSSP. Over residues 562–573 the composition is skewed to basic and acidic residues; that stretch reads KRQPVDSENEIR. Polar residues predominate over residues 612–622; the sequence is DTSVLQVPSSP.

The protein belongs to the SLX4 family. In terms of assembly, forms a heterodimer with SLX1. Post-translationally, phosphorylated in response to DNA damage.

The protein resides in the nucleus. Regulatory subunit of the SLX1-SLX4 structure-specific endonuclease that resolves DNA secondary structures generated during DNA repair and recombination. Has endonuclease activity towards branched DNA substrates, introducing single-strand cuts in duplex DNA close to junctions with ss-DNA. This Debaryomyces hansenii (strain ATCC 36239 / CBS 767 / BCRC 21394 / JCM 1990 / NBRC 0083 / IGC 2968) (Yeast) protein is Structure-specific endonuclease subunit SLX4.